A 548-amino-acid chain; its full sequence is MAKELRFGDDARLQMLAGVNALADAVQVTMGPRGRNVVLEKSYGAPTVTKDGVSVAKEIEFEHRFMNMGAQMVKEVASKTSDTAGDGTTTATVLARSILVEGHKAVAAGMNPMDLKRGIDKAVLAVTKKLQAMSKPCKDSKAIAQVGTISANSDEAIGAIIAEAMEKVGKEGVITVEDGNGLENELSVVEGMQFDRGYISPYFINNQQNMSCELEHPFILLVDKKVSSIREMLSVLEGVAKSGRPLLIIAEDVEGEALATLVVNNMRGIVKVCAVKAPGFGDRRKAMLQDIAILTKGQVISEEIGKSLEGATLEDLGSAKRIVVTKENTTIIDGEGKATEINARITQIRAQMEETTSDYDREKLQERVAKLAGGVAVIKVGAATEVEMKEKKARVEDALHATRAAVEEGIVAGGGVALIRAQKALDSLKGDNDDQNMGINILRRAIESPMRQIVTNAGYEASVVVNKVAEHKDNYGFNAATGEYGDMVEMGILDPTKVTRMALQNAASVASLMLTTECMVADLPKKEEGVGAGDMGGMGGMGGMGGMM.

ATP is bound by residues 29–32 (TMGP), K50, 86–90 (DGTTT), G414, 478–480 (NAA), and D494.

It belongs to the chaperonin (HSP60) family. In terms of assembly, forms a cylinder of 14 subunits composed of two heptameric rings stacked back-to-back. Interacts with the co-chaperonin GroES.

The protein resides in the cytoplasm. The enzyme catalyses ATP + H2O + a folded polypeptide = ADP + phosphate + an unfolded polypeptide.. In terms of biological role, together with its co-chaperonin GroES, plays an essential role in assisting protein folding. The GroEL-GroES system forms a nano-cage that allows encapsulation of the non-native substrate proteins and provides a physical environment optimized to promote and accelerate protein folding. Its function is as follows. May play a protective role against the defense mechanisms generated by the infected macrophages. In Legionella pneumophila subsp. pneumophila (strain Philadelphia 1 / ATCC 33152 / DSM 7513), this protein is Chaperonin GroEL.